We begin with the raw amino-acid sequence, 207 residues long: Sodium/potassium-transporting ATPase subunit beta-1-interacting protein 1 (207 aa).

Residues 1–21 (MGKCSGRCTLVAFCCLQLVAA) form the signal peptide. Residues 22–34 (LERQIFDFLGYQW) lie on the Extracellular side of the membrane. A helical membrane pass occupies residues 35-55 (APILANFLHIMAVILGIFGTV). The Cytoplasmic segment spans residues 56 to 61 (QYRSRY). The chain crosses the membrane as a helical span at residues 62 to 82 (LILYAAWLVLWVGWNAFIICF). The Extracellular portion of the chain corresponds to 83–146 (YLEVGQLSQD…GCLLDYPYIE (64 aa)). Residue Asn100 is glycosylated (N-linked (GlcNAc...) asparagine). The helical transmembrane segment at 147 to 167 (ALSSALQIFLALFGFVFACYV) threads the bilayer. The Cytoplasmic segment spans residues 168 to 207 (SKVFLEEEDSFDFIGGFDSYGYQAPQKTSHLQLQPLYTSG).

The protein belongs to the NKAIN family. In terms of assembly, interacts with ATP1B1 C-terminus.

It is found in the cell membrane. The polypeptide is Sodium/potassium-transporting ATPase subunit beta-1-interacting protein 1 (NKAIN1) (Homo sapiens (Human)).